Here is a 102-residue protein sequence, read N- to C-terminus: Small ribosomal subunit protein uS10 (102 aa).

This sequence belongs to the universal ribosomal protein uS10 family. Part of the 30S ribosomal subunit.

Its function is as follows. Involved in the binding of tRNA to the ribosomes. The sequence is that of Small ribosomal subunit protein uS10 from Tropheryma whipplei (strain TW08/27) (Whipple's bacillus).